The following is a 338-amino-acid chain: Formamidase (338 aa).

Positions 14 to 257 (VGIGLVQLQL…NEIITAEVRP (244 aa)) constitute a CN hydrolase domain. Glutamate 60 (proton acceptor) is an active-site residue. The active-site Proton donor is the lysine 129. Cysteine 162 functions as the Nucleophile in the catalytic mechanism.

The protein belongs to the carbon-nitrogen hydrolase superfamily. Aliphatic amidase family.

The enzyme catalyses formamide + H2O = formate + NH4(+). Its function is as follows. Is an aliphatic amidase with a restricted substrate specificity, as it only hydrolyzes formamide. The protein is Formamidase of Allorhizobium ampelinum (strain ATCC BAA-846 / DSM 112012 / S4) (Agrobacterium vitis (strain S4)).